The sequence spans 336 residues: Large ribosomal subunit protein uL3 (336 aa).

Disordered stretches follow at residues M1–A43, I205–Q230, and R311–G336. The span at G219–Q230 shows a compositional bias: basic residues.

The protein belongs to the universal ribosomal protein uL3 family. As to quaternary structure, part of the 50S ribosomal subunit. Forms a cluster with proteins L14 and L24e.

One of the primary rRNA binding proteins, it binds directly near the 3'-end of the 23S rRNA, where it nucleates assembly of the 50S subunit. This is Large ribosomal subunit protein uL3 from Natronomonas pharaonis (strain ATCC 35678 / DSM 2160 / CIP 103997 / JCM 8858 / NBRC 14720 / NCIMB 2260 / Gabara) (Halobacterium pharaonis).